A 339-amino-acid chain; its full sequence is F420-dependent glucose-6-phosphate dehydrogenase (339 aa).

Residue Asp-41 participates in coenzyme F420-(gamma-Glu)n binding. His-42 serves as the catalytic Proton donor. Coenzyme F420-(gamma-Glu)n is bound by residues Thr-78 and 109–110 (TG). Catalysis depends on Glu-111, which acts as the Proton acceptor. Coenzyme F420-(gamma-Glu)n contacts are provided by residues Asn-114, 177–178 (SG), and 180–181 (AA). 4 residues coordinate substrate: Thr-195, Lys-198, Lys-259, and Arg-283.

It belongs to the F420-dependent glucose-6-phosphate dehydrogenase family. As to quaternary structure, homodimer.

It carries out the reaction oxidized coenzyme F420-(gamma-L-Glu)(n) + D-glucose 6-phosphate + H(+) = 6-phospho-D-glucono-1,5-lactone + reduced coenzyme F420-(gamma-L-Glu)(n). Catalyzes the coenzyme F420-dependent oxidation of glucose 6-phosphate (G6P) to 6-phosphogluconolactone. The chain is F420-dependent glucose-6-phosphate dehydrogenase from Nakamurella multipartita (strain ATCC 700099 / DSM 44233 / CIP 104796 / JCM 9543 / NBRC 105858 / Y-104) (Microsphaera multipartita).